A 250-amino-acid chain; its full sequence is Tripartite motif-containing protein 73 (250 aa).

An RING-type zinc finger spans residues 16-57; that stretch reads CPICLEVFKESLMLQCGHSYCKGCLVSLSYHLDTKVRCPMCW. A B box-type zinc finger spans residues 84-125; sequence PEPKVCVHHRNPLSLFCEKDQELICGLCGLLGSHQHHPVTPV. The Zn(2+) site is built by Cys-89, His-92, Cys-111, and His-117. Coiled coils occupy residues 125 to 169 and 204 to 235; these read VSTV…NESD and LVAS…FGNE.

Belongs to the TRIM/RBCC family.

The protein is Tripartite motif-containing protein 73 (TRIM73) of Homo sapiens (Human).